The following is a 191-amino-acid chain: Retinin (191 aa).

Positions 1 to 21 are cleaved as a signal peptide; the sequence is MSRLFLPVLAIVLVSIGASHT. The tract at residues 52-88 is disordered; it reads LADGSSGSVSSSAAQPEDQSQEEAEEQQVSSASSGSA. Low complexity-rich tracts occupy residues 55–69 and 78–88; these read GSSG…QPED and QQVSSASSGSA.

Post-translationally, phosphorylated. Specifically expressed in cornea (at protein level). Detected in retina and cortex.

It localises to the secreted. This Drosophila melanogaster (Fruit fly) protein is Retinin.